A 68-amino-acid chain; its full sequence is EPYLQVDFHTEMKEESGIAFHFQVHFGCYVVMNSREYGAWKKPVESKNMPFQDGQEFDLSISVLPDKY.

The Galectin domain occupies 1 to 68; the sequence is EPYLQVDFHT…LSISVLPDKY (68 aa).

Interacts with CEL.

Its subcellular location is the cytoplasm. It is found in the cytosol. It localises to the cytoplasmic granule. In terms of biological role, regulates immune responses through the recognition of cell-surface glycans. Essential for the anergy and suppressive function of CD25-positive regulatory T-cells (Treg). This chain is Galectin-10 (CLC), found in Pongo pygmaeus (Bornean orangutan).